Reading from the N-terminus, the 686-residue chain is Methionine--tRNA ligase (686 aa).

Positions 13 to 23 (PYANGQIHIGH) match the 'HIGH' region motif. Zn(2+) is bound by residues Cys144, Cys147, Cys157, and Cys160. The 'KMSKS' region signature appears at 335 to 339 (KMSKS). ATP is bound at residue Lys338. In terms of domain architecture, tRNA-binding spans 580–686 (DFAKVDLRVA…EGAVPGMRIG (107 aa)).

The protein belongs to the class-I aminoacyl-tRNA synthetase family. MetG type 1 subfamily. In terms of assembly, homodimer. Zn(2+) serves as cofactor.

Its subcellular location is the cytoplasm. The catalysed reaction is tRNA(Met) + L-methionine + ATP = L-methionyl-tRNA(Met) + AMP + diphosphate. In terms of biological role, is required not only for elongation of protein synthesis but also for the initiation of all mRNA translation through initiator tRNA(fMet) aminoacylation. The chain is Methionine--tRNA ligase from Cupriavidus necator (strain ATCC 17699 / DSM 428 / KCTC 22496 / NCIMB 10442 / H16 / Stanier 337) (Ralstonia eutropha).